Consider the following 194-residue polypeptide: Protein GrpE (194 aa).

This sequence belongs to the GrpE family. As to quaternary structure, homodimer.

It localises to the cytoplasm. Participates actively in the response to hyperosmotic and heat shock by preventing the aggregation of stress-denatured proteins, in association with DnaK and GrpE. It is the nucleotide exchange factor for DnaK and may function as a thermosensor. Unfolded proteins bind initially to DnaJ; upon interaction with the DnaJ-bound protein, DnaK hydrolyzes its bound ATP, resulting in the formation of a stable complex. GrpE releases ADP from DnaK; ATP binding to DnaK triggers the release of the substrate protein, thus completing the reaction cycle. Several rounds of ATP-dependent interactions between DnaJ, DnaK and GrpE are required for fully efficient folding. This chain is Protein GrpE, found in Aliivibrio fischeri (strain ATCC 700601 / ES114) (Vibrio fischeri).